Here is a 646-residue protein sequence, read N- to C-terminus: Lipoteichoic acid synthase (646 aa).

Topologically, residues 1–7 are cytoplasmic; it reads MSSQKKK. Residues 8 to 28 form a helical membrane-spanning segment; the sequence is ISLFAFFLLTVITITLKTYFS. Residues 29-43 lie on the Extracellular side of the membrane; it reads YYVDFSLGVKGLVQN. The helical transmembrane segment at 44–64 threads the bilayer; it reads LILLMNPYSLVALVLSVFLFF. The Cytoplasmic portion of the chain corresponds to 65–68; sequence KGKK. The helical transmembrane segment at 69–89 threads the bilayer; the sequence is AFWFMFIGGFLLTFLLYANVV. The Extracellular segment spans residues 90-119; the sequence is YFRFFSDFLTFSTLNQVGNVESMGGAVSAS. A helical membrane pass occupies residues 120–140; the sequence is FKWYDFVYFIDTLVYLFILIF. Residues 141–153 lie on the Cytoplasmic side of the membrane; that stretch reads KTKWLDTKAFSKK. Residues 154-174 form a helical membrane-spanning segment; the sequence is FVPVVMAASVALFFLNLAFAE. The Extracellular portion of the chain corresponds to 175 to 646; it reads TDRPELLTRT…ETGPKANSKK (472 aa). Positions 255 and 300 each coordinate Mn(2+). The active site involves threonine 300. Histidine 416 serves as a coordination point for substrate. Positions 475 and 476 each coordinate Mn(2+). A compositionally biased stretch (basic and acidic residues) spans 623–638; sequence NPDFKKVNPSKYKYET. Residues 623–646 are disordered; the sequence is NPDFKKVNPSKYKYETGPKANSKK.

Belongs to the LTA synthase family. Post-translationally, proteolytically cleaved.

The protein localises to the cell membrane. It localises to the secreted. It participates in cell wall biogenesis; lipoteichoic acid biosynthesis. Its function is as follows. Catalyzes the polymerization of lipoteichoic acid (LTA) polyglycerol phosphate, a reaction that presumably uses phosphatidylglycerol (PG) as substrate. Is required for staphylococcal growth and cell division process. The chain is Lipoteichoic acid synthase (ltaS) from Staphylococcus aureus (strain USA300).